The sequence spans 175 residues: Inorganic pyrophosphatase (175 aa).

Substrate-binding residues include lysine 30, arginine 44, and tyrosine 56. Mg(2+) contacts are provided by aspartate 66, aspartate 71, and aspartate 103. Position 142 (tyrosine 142) interacts with substrate.

It belongs to the PPase family. As to quaternary structure, homohexamer. Mg(2+) is required as a cofactor.

The protein resides in the cytoplasm. The catalysed reaction is diphosphate + H2O = 2 phosphate + H(+). In terms of biological role, catalyzes the hydrolysis of inorganic pyrophosphate (PPi) forming two phosphate ions. The chain is Inorganic pyrophosphatase from Haemophilus ducreyi (strain 35000HP / ATCC 700724).